The primary structure comprises 541 residues: CTP synthase (541 aa).

The interval 1–271 is amidoligase domain; it reads MVGKLNPTRF…DTQILKHFDV (271 aa). Residue Ser19 participates in CTP binding. A UTP-binding site is contributed by Ser19. ATP is bound by residues 20–25 and Asp77; that span reads SLGKGL. 2 residues coordinate Mg(2+): Asp77 and Glu145. CTP contacts are provided by residues 152–154, 192–197, and Lys228; these read DIE and KTKPTQ. Residues 192–197 and Lys228 contribute to the UTP site; that span reads KTKPTQ. Residues 296–537 form the Glutamine amidotransferase type-1 domain; it reads VIAIVGKYVT…VTSTLQVKKA (242 aa). Residue Gly355 participates in L-glutamine binding. Catalysis depends on Cys382, which acts as the Nucleophile; for glutamine hydrolysis. L-glutamine contacts are provided by residues 383–386, Glu406, and Arg465; that span reads LGMQ. Active-site residues include His510 and Glu512.

The protein belongs to the CTP synthase family. As to quaternary structure, homotetramer.

The enzyme catalyses UTP + L-glutamine + ATP + H2O = CTP + L-glutamate + ADP + phosphate + 2 H(+). The catalysed reaction is L-glutamine + H2O = L-glutamate + NH4(+). It carries out the reaction UTP + NH4(+) + ATP = CTP + ADP + phosphate + 2 H(+). It participates in pyrimidine metabolism; CTP biosynthesis via de novo pathway; CTP from UDP: step 2/2. With respect to regulation, allosterically activated by GTP, when glutamine is the substrate; GTP has no effect on the reaction when ammonia is the substrate. The allosteric effector GTP functions by stabilizing the protein conformation that binds the tetrahedral intermediate(s) formed during glutamine hydrolysis. Inhibited by the product CTP, via allosteric rather than competitive inhibition. Its function is as follows. Catalyzes the ATP-dependent amination of UTP to CTP with either L-glutamine or ammonia as the source of nitrogen. Regulates intracellular CTP levels through interactions with the four ribonucleotide triphosphates. In Anaplasma phagocytophilum (strain HZ), this protein is CTP synthase.